A 682-amino-acid chain; its full sequence is Zinc finger protein 16 (682 aa).

Residues 1–10 (MPSLRTRREE) are compositionally biased toward basic and acidic residues. Positions 1-43 (MPSLRTRREEAEMELSVPGPSPWTPAAQARVRDAPAVTHPGSA) are disordered. Residues 62–210 (YQQPDCDTRT…GVPTAESPLI (149 aa)) are necessary for transcription activation. A C2H2-type 1; degenerate zinc finger spans residues 209–231 (LICNECGKTFQGNPDLIQRQIVH). Residues 237–259 (FMCDDCGKTFSQNSVLKNRHRSH) form a C2H2-type 2; degenerate zinc finger. Lys-253 is covalently cross-linked (Glycyl lysine isopeptide (Lys-Gly) (interchain with G-Cter in SUMO2)). C2H2-type zinc fingers lie at residues 265–287 (YQCS…QSHH), 293–315 (YMCN…QKSH), 321–343 (YECN…QRIH), 349–371 (YVCS…HRTH), 377–399 (FECG…QRVH), 405–427 (YECN…HRVH), 433–455 (YKCS…RRIH), and 461–483 (HVCN…QIIH). Required for nuclear localization stretches follow at residues 268–393 (SECG…AHLR) and 341–373 (RIHS…THTG). Residues 473 to 503 (SSVLRKHQIIHTGEKPYRCSVCGKAFSHSSA) are required for nuclear localization. Lys-487 carries the N6-acetyllysine modification. 7 C2H2-type zinc fingers span residues 489-511 (YRCS…QGVH), 517-539 (YACH…QRVH), 545-567 (YECT…QRIH), 573-595 (HECN…QKVH), 601-623 (YTCV…QIIH), 629-651 (YKCS…QRIH), and 657-679 (YDCA…QLIH).

This sequence belongs to the krueppel C2H2-type zinc-finger protein family. Interacts with INCA1; the interaction inhibits INCA1 activity and induces the cell cycle process. Ubiquitous.

It is found in the nucleus. Functionally, acts as a transcriptional activator. Promotes cell proliferation by facilitating the cell cycle phase transition from the S to G2/M phase. Involved in both the hemin- and phorbol myristate acetate (PMA)-induced erythroid and megakaryocytic differentiation, respectively. Also plays a role as an inhibitor of cell apoptosis. The chain is Zinc finger protein 16 (ZNF16) from Homo sapiens (Human).